The primary structure comprises 249 residues: Phosphoribosylaminoimidazole-succinocarboxamide synthase (249 aa).

Belongs to the SAICAR synthetase family.

It catalyses the reaction 5-amino-1-(5-phospho-D-ribosyl)imidazole-4-carboxylate + L-aspartate + ATP = (2S)-2-[5-amino-1-(5-phospho-beta-D-ribosyl)imidazole-4-carboxamido]succinate + ADP + phosphate + 2 H(+). It participates in purine metabolism; IMP biosynthesis via de novo pathway; 5-amino-1-(5-phospho-D-ribosyl)imidazole-4-carboxamide from 5-amino-1-(5-phospho-D-ribosyl)imidazole-4-carboxylate: step 1/2. The polypeptide is Phosphoribosylaminoimidazole-succinocarboxamide synthase (Roseiflexus castenholzii (strain DSM 13941 / HLO8)).